The sequence spans 84 residues: uncharacterized protein (84 aa).

This is an uncharacterized protein from Orgyia pseudotsugata multicapsid polyhedrosis virus (OpMNPV).